Consider the following 161-residue polypeptide: 2-C-methyl-D-erythritol 2,4-cyclodiphosphate synthase (161 aa).

The a divalent metal cation site is built by Asp-8 and His-10. Residues 8–10 (DVH) and 34–35 (HS) contribute to the 4-CDP-2-C-methyl-D-erythritol 2-phosphate site. Residue His-42 coordinates a divalent metal cation. 4-CDP-2-C-methyl-D-erythritol 2-phosphate is bound by residues 56–58 (DIG), 61–65 (FPDTD), 100–106 (AQSPKMA), 132–135 (TTEE), and Phe-139.

The protein belongs to the IspF family. In terms of assembly, homotrimer. A divalent metal cation is required as a cofactor.

It carries out the reaction 4-CDP-2-C-methyl-D-erythritol 2-phosphate = 2-C-methyl-D-erythritol 2,4-cyclic diphosphate + CMP. The protein operates within isoprenoid biosynthesis; isopentenyl diphosphate biosynthesis via DXP pathway; isopentenyl diphosphate from 1-deoxy-D-xylulose 5-phosphate: step 4/6. Involved in the biosynthesis of isopentenyl diphosphate (IPP) and dimethylallyl diphosphate (DMAPP), two major building blocks of isoprenoid compounds. Catalyzes the conversion of 4-diphosphocytidyl-2-C-methyl-D-erythritol 2-phosphate (CDP-ME2P) to 2-C-methyl-D-erythritol 2,4-cyclodiphosphate (ME-CPP) with a corresponding release of cytidine 5-monophosphate (CMP). The protein is 2-C-methyl-D-erythritol 2,4-cyclodiphosphate synthase of Clostridioides difficile (strain 630) (Peptoclostridium difficile).